The following is a 255-amino-acid chain: dTDP-3-amino-3,6-dideoxy-alpha-D-glucopyranose N,N-dimethyltransferase (255 aa).

Residues tyrosine 14, tyrosine 22, tyrosine 33, alanine 58, 58-59 (AC), glutamate 79, 101-102 (DM), and methionine 117 each bind S-adenosyl-L-methionine.

The protein belongs to the methyltransferase TylM1/DesVI family. As to quaternary structure, homodimer.

The catalysed reaction is dTDP-3-amino-3,6-dideoxy-alpha-D-glucose + 2 S-adenosyl-L-methionine = dTDP-alpha-D-mycaminose + 2 S-adenosyl-L-homocysteine + 2 H(+). The protein operates within antibiotic biosynthesis; tylosin biosynthesis. In terms of biological role, S-adenosyl-L-methionine-dependent methyltransferase involved in the biosynthesis of mycaminose, an essential structural component of the macrolide antibiotic tylosin. Involved in the last step in mycaminose biosynthesis by mediating dimethylation of the hexose C-3' amino group. The protein is dTDP-3-amino-3,6-dideoxy-alpha-D-glucopyranose N,N-dimethyltransferase (tylM1) of Streptomyces fradiae (Streptomyces roseoflavus).